The following is a 271-amino-acid chain: Exosome complex component Rrp42 (271 aa).

This sequence belongs to the RNase PH family. Rrp42 subfamily. In terms of assembly, component of the archaeal exosome complex. Forms a hexameric ring-like arrangement composed of 3 Rrp41-Rrp42 heterodimers. The hexameric ring associates with a trimer of Rrp4 and/or Csl4 subunits.

The protein localises to the cytoplasm. Functionally, non-catalytic component of the exosome, which is a complex involved in RNA degradation. Contributes to the structuring of the Rrp41 active site. This Methanothermobacter thermautotrophicus (strain ATCC 29096 / DSM 1053 / JCM 10044 / NBRC 100330 / Delta H) (Methanobacterium thermoautotrophicum) protein is Exosome complex component Rrp42.